The primary structure comprises 256 residues: Trans-aconitate 2-methyltransferase (256 aa).

This sequence belongs to the methyltransferase superfamily. Tam family.

Its subcellular location is the cytoplasm. The catalysed reaction is trans-aconitate + S-adenosyl-L-methionine = (E)-3-(methoxycarbonyl)pent-2-enedioate + S-adenosyl-L-homocysteine. Catalyzes the S-adenosylmethionine monomethyl esterification of trans-aconitate. In Rhizobium rhizogenes (strain K84 / ATCC BAA-868) (Agrobacterium radiobacter), this protein is Trans-aconitate 2-methyltransferase.